The chain runs to 281 residues: MEMO1 family protein Pars_0062 (281 aa).

The protein belongs to the MEMO1 family.

The protein is MEMO1 family protein Pars_0062 of Pyrobaculum arsenaticum (strain DSM 13514 / JCM 11321 / PZ6).